The sequence spans 327 residues: Serine/threonine-protein phosphatase PP2A catalytic subunit (327 aa).

4 residues coordinate Mn(2+): Asp-75, His-77, Asp-103, and Asn-135. The active-site Proton donor is His-136. Mn(2+) is bound by residues His-185 and His-259. The residue at position 327 (Leu-327) is a Leucine methyl ester.

Belongs to the PPP phosphatase family. PP-2A subfamily. Mn(2+) is required as a cofactor.

The catalysed reaction is O-phospho-L-seryl-[protein] + H2O = L-seryl-[protein] + phosphate. The enzyme catalyses O-phospho-L-threonyl-[protein] + H2O = L-threonyl-[protein] + phosphate. This chain is Serine/threonine-protein phosphatase PP2A catalytic subunit (pph-1), found in Neurospora crassa (strain ATCC 24698 / 74-OR23-1A / CBS 708.71 / DSM 1257 / FGSC 987).